A 312-amino-acid chain; its full sequence is 4-diphosphocytidyl-2-C-methyl-D-erythritol kinase (312 aa).

The active site involves K16. 101–111 (PIGAGLAGGSS) serves as a coordination point for ATP. D143 is a catalytic residue.

This sequence belongs to the GHMP kinase family. IspE subfamily.

The enzyme catalyses 4-CDP-2-C-methyl-D-erythritol + ATP = 4-CDP-2-C-methyl-D-erythritol 2-phosphate + ADP + H(+). It functions in the pathway isoprenoid biosynthesis; isopentenyl diphosphate biosynthesis via DXP pathway; isopentenyl diphosphate from 1-deoxy-D-xylulose 5-phosphate: step 3/6. Its function is as follows. Catalyzes the phosphorylation of the position 2 hydroxy group of 4-diphosphocytidyl-2C-methyl-D-erythritol. In Prochlorococcus marinus (strain MIT 9515), this protein is 4-diphosphocytidyl-2-C-methyl-D-erythritol kinase.